The sequence spans 319 residues: Large ribosomal subunit protein uL10 (319 aa).

The span at 286–295 shows a compositional bias: low complexity; sequence ADSGAAAPSA. The interval 286 to 319 is disordered; it reads ADSGAAAPSAAKEEEKKEEPEEESDGDLGMSLFD.

The protein belongs to the universal ribosomal protein uL10 family. P0 forms a pentameric complex by interaction with dimers of P1 and P2. Interacts with NSF. Phosphorylated. In terms of tissue distribution, highly expressed in stems, inflorescences and immature seeds (at protein level). Expressed in leaves and mature seeds (at protein level).

Ribosomal protein P0 is the functional equivalent of E.coli protein L10. The protein is Large ribosomal subunit protein uL10 of Oryza sativa subsp. japonica (Rice).